The sequence spans 238 residues: MNISGSIKQKLLQFLKKQKSPELLATYLFYLEQSLHLSPVVFVRDKIIFKSAEDAIQLLEADKKIWRETEIQISSGKPEVNEQTKRIYICPFTGKVFADNVYANPQDAIYDWLSSCPQNRERQSGVAVKRFLVSDDPEVIRAYIVPPKEPIIKTVYASAVTGKLFHSLPTLLEDFKTSYLRPMTLEEVQNQNKFQLESSFLTLLQDALEEEKIAEFVESLADDTAFHKYISQWVDTEE.

The protein belongs to the chlamydial CPn_0658/CT_538/TC_0825 family.

This is an uncharacterized protein from Chlamydia trachomatis serovar D (strain ATCC VR-885 / DSM 19411 / UW-3/Cx).